Consider the following 640-residue polypeptide: Sodium-dependent nutrient amino acid transporter 1 (640 aa).

Positions 1-13 (MELKPNGNHNNNN) are enriched in low complexity. The disordered stretch occupies residues 1-25 (MELKPNGNHNNNNAAEKSEDTEKAK). Over 1–30 (MELKPNGNHNNNNAAEKSEDTEKAKAERTN) the chain is Cytoplasmic. Over residues 16 to 25 (EKSEDTEKAK) the composition is skewed to basic and acidic residues. The next 3 helical transmembrane spans lie at 31 to 51 (WGNG…LGNV), 64 to 84 (GAFL…MYYL), and 117 to 137 (TICI…YLFV). N-linked (GlcNAc...) asparagine glycosylation is found at Asn-174, Asn-181, and Asn-197. The next 9 membrane-spanning stretches (helical) occupy residues 228-248 (PDWK…LVIM), 257-277 (AAYF…IRAV), 306-326 (AVVQ…MFAS), 340-360 (IVTT…FAIL), 400-420 (LFSV…IVAL), 447-467 (CGFL…LTLV), 473-493 (TYVV…IYGL), 515-535 (CWSF…MVTI), and 551-571 (VAGW…GLWY).

The protein belongs to the sodium:neurotransmitter symporter (SNF) (TC 2.A.22) family.

The protein localises to the membrane. In terms of biological role, unusual broad substrate spectrum amino acid:sodium cotransporter that promotes absorption of the D isomers of essential amino acids. Neutral amino acids are the preferred substrates, especially methionine and phenylalanine. The chain is Sodium-dependent nutrient amino acid transporter 1 from Drosophila ananassae (Fruit fly).